The sequence spans 125 residues: 17 kDa gas vesicle protein (125 aa).

The protein belongs to the gas vesicle GvpC family.

Its subcellular location is the gas vesicle. Its function is as follows. Gas vesicles (GV) are hollow, gas filled proteinaceous nanostructures. During planktonic growth they allow positioning of the organism at a favorable depth for light or nutrient acquisition. This Dactylococcopsis salina (strain PCC 8305) (Myxobactron salinum) protein is 17 kDa gas vesicle protein.